The primary structure comprises 341 residues: Zinc transporter 6, chloroplastic (341 aa).

The chain crosses the membrane as a helical span at residues 28–48; it reads IVAVFAIFLTSVFGVWGPVLL. The Cytoplasmic portion of the chain corresponds to 49 to 61; that stretch reads AKYFHGKPLYDKA. A helical membrane pass occupies residues 62-82; that stretch reads ILVIKCFAAGVILSTSLVHVL. Topologically, residues 83–102 are lumenal; the sequence is PEAFESLADCQVSSRHPWKD. A helical transmembrane segment spans residues 103–123; the sequence is FPFAGLVTMIGAITALLVDLT. At 124–179 the chain is on the cytoplasmic side; it reads ASEHMGHGGGGGGDGGMEYMPVGKAVGGLEMKEGKCGADLEIQENSEEEIVKMKQR. A helical transmembrane segment spans residues 180 to 200; it reads LVSQVLEIGIIFHSVIIGVTM. Over 201–211 the chain is Lumenal; it reads GMSQNKCTIRP. A helical membrane pass occupies residues 212 to 232; that stretch reads LIAALSFHQIFEGLGLGGCIA. Residues 233–243 lie on the Cytoplasmic side of the membrane; the sequence is QAGFKAGTVVY. A helical transmembrane segment spans residues 244-264; that stretch reads MCLMFAVTTPLGIVLGMVIFA. Residues 265-280 are Lumenal-facing; it reads ATGYDDQNPNALIMEG. The helical transmembrane segment at 281–301 threads the bilayer; it reads LLGSFSSGILIYMALVDLIAL. Residues 302–320 lie on the Cytoplasmic side of the membrane; that stretch reads DFFHNKMLTTCGESGSRLK. The chain crosses the membrane as a helical span at residues 321-341; the sequence is KLCFVALVLGSASMSLLALWA.

Belongs to the ZIP transporter (TC 2.A.5) family.

The protein resides in the plastid. The protein localises to the chloroplast thylakoid membrane. Functionally, may play a role in the transport of zinc in the plastids. In Arabidopsis thaliana (Mouse-ear cress), this protein is Zinc transporter 6, chloroplastic (ZIP6).